We begin with the raw amino-acid sequence, 259 residues long: Isoepoxydon dehydrogenase patN (259 aa).

Asp-69, Asn-96, and Lys-125 together coordinate NADP(+). Active-site proton donor residues include Ser-143 and Ser-144. Residues Tyr-158, Lys-162, and Val-191 each coordinate NADP(+). Tyr-158 acts as the Proton acceptor in catalysis. Lys-162 functions as the Lowers pKa of active site Tyr in the catalytic mechanism.

Belongs to the short-chain dehydrogenases/reductases (SDR) family.

It localises to the cytoplasm. The protein resides in the cytosol. It catalyses the reaction isoepoxydon + NADP(+) = phyllostine + NADPH + H(+). It participates in mycotoxin biosynthesis; patulin biosynthesis. Functionally, isoepoxydon dehydrogenase; part of the gene cluster that mediates the biosynthesis of patulin, an acetate-derived tetraketide mycotoxin produced by several fungal species that shows antimicrobial properties against several bacteria. PatN catalyzes the conversion of isoepoxydon into phyllostine. The pathway begins with the synthesis of 6-methylsalicylic acid by the polyketide synthase (PKS) patK via condensation of acetate and malonate units. The 6-methylsalicylic acid decarboxylase patG then catalyzes the decarboxylation of 6-methylsalicylic acid to yield m-cresol (also known as 3-methylphenol). These first reactions occur in the cytosol. The intermediate m-cresol is then transported into the endoplasmic reticulum where the cytochrome P450 monooxygenase patH converts it to m-hydroxybenzyl alcohol, which is further converted to gentisyl alcohol by the cytochrome P450 monooxygenase patI. The oxidoreductases patJ and patO further convert gentisyl alcohol to isoepoxydon in the vacuole. PatN catalyzes then the transformation of isoepoxydon into phyllostine. The cluster protein patF is responsible for the conversion from phyllostine to neopatulin whereas the alcohol dehydrogenase patD converts neopatulin to E-ascladiol. The steps between isoepoxydon and E-ascladiol occur in the cytosol, and E-ascladiol is probably secreted to the extracellular space by one of the cluster-specific transporters patC or patM. Finally, the secreted patulin synthase patE catalyzes the conversion of E-ascladiol to patulin. The sequence is that of Isoepoxydon dehydrogenase patN from Penicillium expansum (Blue mold rot fungus).